The chain runs to 935 residues: Progesterone receptor (935 aa).

A disordered region spans residues Met1–Ser49. Residues Met1–Leu164 form an AF3; mediates transcriptional activation region. Residues Met1–Ile568 are modulating, Pro-Rich. At Ser20 the chain carries Phosphoserine. The segment covering Ala32–Thr44 has biased composition (polar residues). The short motif at Leu55–Leu59 is the LXXL motif 1 element. The tract at residues Arg62–Gln158 is disordered. Ser81 carries the post-translational modification Phosphoserine. Residues Leu115–Trp119 carry the LXXL motif 2 motif. Ser130 and Ser162 each carry phosphoserine. Residues Met165–His305 are mediates transcriptional transrepression. A Nuclear localization signal motif is present at residues Lys183 to Arg187. Positions Arg187–Ala233 are disordered. Ser190 is subject to Phosphoserine. Polar residues predominate over residues Pro191 to Pro203. The residue at position 213 (Ser213) is a Phosphoserine. Over residues Glu220–Asp231 the composition is skewed to acidic residues. The residue at position 294 (Ser294) is a Phosphoserine; by MAPK1. The interval Ser328–Pro365 is disordered. Over residues Ala335–Ser356 the composition is skewed to low complexity. Ser345 bears the Phosphoserine; by MAPK mark. A Glycyl lysine isopeptide (Lys-Gly) (interchain with G-Cter in SUMO); alternate cross-link involves residue Lys388. A Glycyl lysine isopeptide (Lys-Gly) (interchain with G-Cter in ubiquitin); alternate cross-link involves residue Lys388. The tract at residues Glu390 to Ser452 is disordered. The residue at position 400 (Ser400) is a Phosphoserine; by CDK2. Positions Pro418–Arg433 are enriched in pro residues. Residues Pro434 to Ser452 show a composition bias toward low complexity. The interval Ser456–Arg548 is AF1; mediates transcriptional activation. Lys533 is covalently cross-linked (Glycyl lysine isopeptide (Lys-Gly) (interchain with G-Cter in SUMO)). NR C4-type zinc fingers lie at residues Cys569 to Cys589 and Cys605 to Cys629. Positions Cys569 to Phe641 form a DNA-binding region, nuclear receptor. Ser678 is modified (phosphoserine). Residues Gln681 to Ile915 enclose the NR LBD domain. The interval Leu689–Lys935 is AF2; mediates transcriptional activation. A progesterone-binding site is contributed by Arg768.

The protein belongs to the nuclear hormone receptor family. As to quaternary structure, interacts with SMARD1 and UNC45A. Interacts with CUEDC2; the interaction promotes ubiquitination, decreases sumoylation, and represses transcriptional activity. Interacts with PIAS3; the interaction promotes sumoylation of PR in a hormone-dependent manner, inhibits DNA-binding, and alters nuclear export. Interacts with SP1; the interaction requires ligand-induced phosphorylation on Ser-345 by ERK1/2-MAPK. Interacts with PRMT2. Interacts with NCOA2 and NCOA1. Interacts with KLF9. Interacts with GTF2B. Phosphorylated on multiple serine sites. Several of these sites are hormone-dependent. Phosphorylation on Ser-294 is highly hormone-dependent and modulates ubiquitination and sumoylation on Lys-388. Phosphorylation on Ser-345 also requires induction by hormone. Basal phosphorylation on Ser-81, Ser-162, Ser-190 and Ser-400 is increased in response to progesterone and can be phosphorylated in vitro by the CDK2-A1 complex. Increased levels of phosphorylation on Ser-400 also in the presence of EGF, heregulin, IGF, PMA and FBS. Phosphorylation at this site by CDK2 is ligand-independent, and increases nuclear translocation and transcriptional activity. Phosphorylation at Ser-162 and Ser-294, but not at Ser-190, is impaired during the G(2)/M phase of the cell cycle. Phosphorylation on Ser-345 by ERK1/2 MAPK is required for interaction with SP1. Post-translationally, sumoylation is hormone-dependent and represses transcriptional activity. Sumoylation on all three sites is enhanced by PIAS3. Desumoylated by SENP1. Sumoylation on Lys-388, the main site of sumoylation, is repressed by ubiquitination on the same site, and modulated by phosphorylation at Ser-294. In terms of processing, ubiquitination is hormone-dependent and represses sumoylation on the same site. Promoted by MAPK-mediated phosphorylation on Ser-294. Ubiquitinated by UBR5, leading to its degradation: UBR5 specifically recognizes and binds ligand-bound PGR when it is not associated with coactivators (NCOAs). In presence of NCOAs, the UBR5-degron is not accessible, preventing its ubiquitination and degradation. Palmitoylated by ZDHHC7 and ZDHHC21. Palmitoylation is required for plasma membrane targeting and for rapid intracellular signaling via ERK and AKT kinases and cAMP generation.

It is found in the nucleus. The protein resides in the cytoplasm. Functionally, the steroid hormones and their receptors are involved in the regulation of eukaryotic gene expression and affect cellular proliferation and differentiation in target tissues. Transcriptional activator of several progesteron-dependent promoters in a variety of cell types. Involved in activation of SRC-dependent MAPK signaling on hormone stimulation. The polypeptide is Progesterone receptor (PGR) (Sapajus apella (Brown-capped capuchin)).